The following is a 211-amino-acid chain: MPAVRIKICGITRVEDALAAAAAGADAIGLVFYAKSPRAVDIHRAREIVRALPPFVTSVGLFVNASRCELGEILDAVPLDLLQFHGDERAEDCEGHRRPYLKALRVKPGDDIVGRAAAYPGAAGILLDTYVEGVPGGTGAAFDWSLVPTDLGKPLVLAGGLTPDNVGRAVEQVKPYAVDVSGGVEASKGIKDAARVRAFVDAVRSRRRDET.

The protein belongs to the TrpF family.

It carries out the reaction N-(5-phospho-beta-D-ribosyl)anthranilate = 1-(2-carboxyphenylamino)-1-deoxy-D-ribulose 5-phosphate. It participates in amino-acid biosynthesis; L-tryptophan biosynthesis; L-tryptophan from chorismate: step 3/5. This chain is N-(5'-phosphoribosyl)anthranilate isomerase, found in Pseudomonas aeruginosa (strain LESB58).